Reading from the N-terminus, the 57-residue chain is Small ribosomal subunit protein bS21 (57 aa).

A disordered region spans residues 35 to 57 (REHYEKPSVKRKKKAEAARKKKF). Residues 43–57 (VKRKKKAEAARKKKF) show a composition bias toward basic residues.

Belongs to the bacterial ribosomal protein bS21 family.

This is Small ribosomal subunit protein bS21 from Alkaliphilus metalliredigens (strain QYMF).